Here is a 40-residue protein sequence, read N- to C-terminus: U2-ctenitoxin-Pr1a (40 aa).

Disulfide bonds link Cys2–Cys17, Cys9–Cys22, Cys16–Cys32, and Cys24–Cys30.

Expressed by the venom gland.

It localises to the secreted. Neurotoxin. The polypeptide is U2-ctenitoxin-Pr1a (Phoneutria reidyi (Brazilian Amazonian armed spider)).